Reading from the N-terminus, the 349-residue chain is Sexual stage-specific protein G37 (349 aa).

The first 18 residues, 1–18 (MKLYLVTFLFFVIYKNKT), serve as a signal peptide directing secretion. The Extracellular segment spans residues 19–91 (FVDCVTKKQD…INQVSNNIMR (73 aa)). Residues 92–112 (VYISLLSLFLFPYFSYIGIFG) form a helical membrane-spanning segment. Over 113 to 117 (HSRNK) the chain is Cytoplasmic. The helical transmembrane segment at 118–138 (ANLTLSSLLAYFALLVSFFLF) threads the bilayer. Topologically, residues 139-140 (NG) are extracellular. The chain crosses the membrane as a helical span at residues 141 to 161 (ILNIGFVTSLPLVVAVLIFIL). Over 162–176 (GVSDCEINFLYKYTR) the chain is Cytoplasmic. A helical transmembrane segment spans residues 177-197 (YIFCFIISKLIYDVVTYISKD). At 198–218 (GANIFDYGFSGHIYMNLLRGK) the chain is on the extracellular side. A helical membrane pass occupies residues 219–239 (YYIVLKLIHLIILSLISLIII). Topologically, residues 240–262 (KICPKIFSNNHLKSPISITFDKY) are cytoplasmic. A helical transmembrane segment spans residues 263–283 (IISFLCSLPIATAISQVFYLL). The Extracellular segment spans residues 284 to 305 (SKTINPIDPSIFFMIPSSINFS). A helical membrane pass occupies residues 306–326 (STGTIFSLSIWILMSYLMTFL). Over 327–349 (RNKVEADFNNILNKIPNNLPDFI) the chain is Cytoplasmic.

It is found in the cell membrane. Its function is as follows. Involved in the development of male gametocytes. The sequence is that of Sexual stage-specific protein G37 from Plasmodium berghei (strain Anka).